The primary structure comprises 491 residues: UDP-N-acetylmuramoyl-L-alanyl-D-glutamate--2,6-diaminopimelate ligase (491 aa).

Ser-30 provides a ligand contact to UDP-N-acetyl-alpha-D-muramoyl-L-alanyl-D-glutamate. Residue 108–114 coordinates ATP; sequence GTNGKTT. UDP-N-acetyl-alpha-D-muramoyl-L-alanyl-D-glutamate is bound by residues Asn-149, 150–151, Ser-177, Gln-183, and Arg-185; that span reads TT. N6-carboxylysine is present on Lys-217. Meso-2,6-diaminopimelate is bound by residues Arg-383, 407–410, Gly-458, and Glu-462; that span reads DNPR. The short motif at 407 to 410 is the Meso-diaminopimelate recognition motif element; it reads DNPR.

This sequence belongs to the MurCDEF family. MurE subfamily. Mg(2+) is required as a cofactor. In terms of processing, carboxylation is probably crucial for Mg(2+) binding and, consequently, for the gamma-phosphate positioning of ATP.

Its subcellular location is the cytoplasm. The catalysed reaction is UDP-N-acetyl-alpha-D-muramoyl-L-alanyl-D-glutamate + meso-2,6-diaminopimelate + ATP = UDP-N-acetyl-alpha-D-muramoyl-L-alanyl-gamma-D-glutamyl-meso-2,6-diaminopimelate + ADP + phosphate + H(+). It functions in the pathway cell wall biogenesis; peptidoglycan biosynthesis. Catalyzes the addition of meso-diaminopimelic acid to the nucleotide precursor UDP-N-acetylmuramoyl-L-alanyl-D-glutamate (UMAG) in the biosynthesis of bacterial cell-wall peptidoglycan. This Listeria innocua serovar 6a (strain ATCC BAA-680 / CLIP 11262) protein is UDP-N-acetylmuramoyl-L-alanyl-D-glutamate--2,6-diaminopimelate ligase.